Consider the following 95-residue polypeptide: Putative defensin-like protein 262 (95 aa).

The N-terminal stretch at 1-26 (MEKTSLKLIFLFSLTVIAFCSSLGDA) is a signal peptide. Disulfide bonds link C48–C95, C64–C83, C70–C91, and C74–C93.

It belongs to the DEFL family.

The protein localises to the secreted. This chain is Putative defensin-like protein 262, found in Arabidopsis thaliana (Mouse-ear cress).